A 1072-amino-acid polypeptide reads, in one-letter code: Zn(2)-C6 fungal-type transcription factor FTF2 (1072 aa).

Positions 179–206 form a DNA-binding region, zn(2)-C6 fungal-type; the sequence is CIACRRKKIRCSGEKPACKHCLRSRIPC.

The protein resides in the nucleus. In terms of biological role, zn(2)-C6 fungal-type transcription factor that has a role in conidia production and also in plant colonization. Acts as a negative regulator of the production of macroconidia and is required for full virulence and the positive regulation of SIX effectors. In addition, FTF2 is also involved in the regulation of class II hydrophobins FOXG_02746 and FOXG_02748 likely required for plant colonization. This is Zn(2)-C6 fungal-type transcription factor FTF2 from Fusarium oxysporum f. sp. lycopersici (strain 4287 / CBS 123668 / FGSC 9935 / NRRL 34936) (Fusarium vascular wilt of tomato).